The following is a 436-amino-acid chain: Chromosomal replication initiator protein DnaA (436 aa).

The segment at 1–69 is domain I, interacts with DnaA modulators; sequence MLADEVIELL…ANIFEVKTGI (69 aa). The segment at 69-99 is domain II; sequence IKPVISITTQKNRVSIKAKDIDVKQIRTQSS. The segment at 100–314 is domain III, AAA+ region; it reads LLNPSYTFES…SAIININAFA (215 aa). ATP-binding residues include glycine 144, glycine 146, lysine 147, and threonine 148. The domain IV, binds dsDNA stretch occupies residues 315–436; the sequence is NIMRQEITLE…ELKNKITSKE (122 aa).

It belongs to the DnaA family. In terms of assembly, oligomerizes as a right-handed, spiral filament on DNA at oriC.

Its subcellular location is the cytoplasm. Its function is as follows. Plays an essential role in the initiation and regulation of chromosomal replication. ATP-DnaA binds to the origin of replication (oriC) to initiate formation of the DNA replication initiation complex once per cell cycle. Binds the DnaA box (a 9 base pair repeat at the origin) and separates the double-stranded (ds)DNA. Forms a right-handed helical filament on oriC DNA; dsDNA binds to the exterior of the filament while single-stranded (ss)DNA is stabiized in the filament's interior. The ATP-DnaA-oriC complex binds and stabilizes one strand of the AT-rich DNA unwinding element (DUE), permitting loading of DNA polymerase. After initiation quickly degrades to an ADP-DnaA complex that is not apt for DNA replication. Binds acidic phospholipids. The protein is Chromosomal replication initiator protein DnaA of Campylobacter fetus subsp. fetus (strain 82-40).